Consider the following 607-residue polypeptide: Elongation factor 4 (607 aa).

The tr-type G domain maps to 11 to 193 (EKIRNFSIIA…QIVEKVPAPQ (183 aa)). GTP contacts are provided by residues 23 to 28 (DHGKST) and 140 to 143 (NKID).

It belongs to the TRAFAC class translation factor GTPase superfamily. Classic translation factor GTPase family. LepA subfamily.

Its subcellular location is the cell membrane. It carries out the reaction GTP + H2O = GDP + phosphate + H(+). Its function is as follows. Required for accurate and efficient protein synthesis under certain stress conditions. May act as a fidelity factor of the translation reaction, by catalyzing a one-codon backward translocation of tRNAs on improperly translocated ribosomes. Back-translocation proceeds from a post-translocation (POST) complex to a pre-translocation (PRE) complex, thus giving elongation factor G a second chance to translocate the tRNAs correctly. Binds to ribosomes in a GTP-dependent manner. The polypeptide is Elongation factor 4 (Lactococcus lactis subsp. cremoris (strain MG1363)).